A 229-amino-acid chain; its full sequence is Putative N-acetylmannosamine-6-phosphate 2-epimerase (229 aa).

Belongs to the NanE family.

The catalysed reaction is an N-acyl-D-glucosamine 6-phosphate = an N-acyl-D-mannosamine 6-phosphate. Its pathway is amino-sugar metabolism; N-acetylneuraminate degradation; D-fructose 6-phosphate from N-acetylneuraminate: step 3/5. Converts N-acetylmannosamine-6-phosphate (ManNAc-6-P) to N-acetylglucosamine-6-phosphate (GlcNAc-6-P). The sequence is that of Putative N-acetylmannosamine-6-phosphate 2-epimerase from Escherichia coli O127:H6 (strain E2348/69 / EPEC).